The chain runs to 205 residues: G-protein coupled receptor (205 aa).

5 helical membrane passes run 40–60, 71–91, 107–127, 151–171, and 185–205; these read GITLTASVPMIIIVITTMILY, FYVITLFASDFVLMWCVFFMT, LVYFIYHAVCSYSISMLAIIA, IGILLLASSMCAIPTALFVQI, and LSSPKAYELFLAVKIVFSFIW. A disulfide bond links C105 and C181.

The protein belongs to the G-protein coupled receptor 1 family.

Its subcellular location is the host membrane. This Human herpesvirus 6B (strain Z29) (HHV-6 variant B) protein is G-protein coupled receptor (U12).